Here is an 838-residue protein sequence, read N- to C-terminus: MQEQEIGFISKYNEGLCVNTDPVSILTSILDMSLHRQMGSDRDLQSSASSVSLPSVKKAPKKRRISIGSLFRRKKDNKRKSRELNGGVDGIASIESIHSEMCTDKNSIFSTNTSSDNGLTSISKQIGDFIECPLCLLRHSKDRFPDIMTCHHRSCVDCLRQYLRIEISESRVNISCPECTERFNPHDIRLILSDDVLMEKYEEFMLRRWLVADPDCRWCPAPDCGYAVIAFGCASCPKLTCGREGCGTEFCYHCKQIWHPNQTCDAARQERAQSLRLRTIRSSSISYSQESGAAADDIKPCPRCAAYIIKMNDGSCNHMTCAVCGCEFCWLCMKEISDLHYLSPSGCTFWGKKPWSRKKKILWQLGTLVGAPVGIALIAGIAIPAMIIGIPVYVGRKIHNRYEGKDVSKHKRNLAIAGGVTLSVIVSPVVAAVTVGIGVPIMLAYVYGVVPISLCRSGGCGVSAGNGKGVRIEFDDENDINVGGTNTAVDTTSVAEARHNPSIGEGSVGGLTGSLSASGSHMDRIGAIRDNLSETASTMALAGASITGSLSGSAMVNCFNRLEVQADVQKERYSLSGESGTVSLGTVSDNASTKAMAGSILNSYIPLDKEGNSMEVQVDIESKPSKFRHNSGSSSVDDGSATRSHAGGSSSGLPEGKSSATKWSKEATAGKKSKSGKLRKKGNMKINETREDMDAQLLEQQSTNSSEFEAPSLSDSMPSVADSHSSHFSEFSCSDLESMKTSCSHGSSDYHTRFATVNILPEVENDRLENSPHQCSISVVTQTASCSEVSQLNHIAEEHGNNGIKPNVDLYFGDALKETNNNHSHQTMELKVAIQTEI.

The disordered stretch occupies residues 41 to 61; sequence DRDLQSSASSVSLPSVKKAPK. Residues 46 to 57 show a composition bias toward low complexity; the sequence is SSASSVSLPSVK. Residues 128 to 351 form a TRIAD supradomain region; it reads DFIECPLCLL…LSPSGCTFWG (224 aa). The Zn(2+) site is built by cysteine 132, cysteine 135, cysteine 150, histidine 152, cysteine 155, cysteine 158, cysteine 176, cysteine 179, cysteine 219, cysteine 224, cysteine 241, cysteine 246, cysteine 251, cysteine 254, histidine 259, cysteine 264, cysteine 301, and cysteine 304. Residues 132 to 179 form an RING-type 1 zinc finger; the sequence is CPLCLLRHSKDRFPDIMTCHHRSCVDCLRQYLRIEISESRVNISCPEC. An IBR-type zinc finger spans residues 199–264; the sequence is EKYEEFMLRR…KQIWHPNQTC (66 aa). The segment at 301-332 adopts an RING-type 2; atypical zinc-finger fold; that stretch reads CPRCAAYIIKMNDGSCNHMTCAVCGCEFCWLC. Cysteine 316 is a catalytic residue. Residues cysteine 321, cysteine 324, cysteine 329, cysteine 332, histidine 340, and cysteine 347 each coordinate Zn(2+). The next 2 membrane-spanning stretches (helical) occupy residues 368–388 and 424–444; these read LVGA…AMII and VIVS…IMLA. Disordered regions lie at residues 622 to 685 and 700 to 721; these read SKPS…GNMK and QQST…PSVA. The segment covering 630–662 has biased composition (polar residues); that stretch reads NSGSSSVDDGSATRSHAGGSSSGLPEGKSSATK. Serine 631 carries the phosphoserine modification. Residues 660-838 are interaction with CASR; the sequence is ATKWSKEATA…ELKVAIQTEI (179 aa). Residues 671–683 show a composition bias toward basic residues; the sequence is KKSKSGKLRKKGN. Positions 700–717 are enriched in polar residues; that stretch reads QQSTNSSEFEAPSLSDSM.

It belongs to the RBR family. RNF19 subfamily. As to quaternary structure, interacts with UBE2L3 and UBE2L6. Interacts with transcription factor Sp1. Interacts with VCP, CASR, SNCAIP and with some SOD1 variants which cause amyotrophic lateral sclerosis, but not with wild-type SOD1. As to expression, widely expressed, with highest levels in heart. Ubiquitously expressed in the central nervous system.

It localises to the membrane. It is found in the cytoplasm. Its subcellular location is the cytoskeleton. The protein resides in the microtubule organizing center. The protein localises to the centrosome. It catalyses the reaction [E2 ubiquitin-conjugating enzyme]-S-ubiquitinyl-L-cysteine + [acceptor protein]-L-lysine = [E2 ubiquitin-conjugating enzyme]-L-cysteine + [acceptor protein]-N(6)-ubiquitinyl-L-lysine.. It participates in protein modification; protein ubiquitination. Functionally, E3 ubiquitin-protein ligase which accepts ubiquitin from E2 ubiquitin-conjugating enzymes UBE2L3 and UBE2L6 in the form of a thioester and then directly transfers the ubiquitin to targeted substrates, such as SNCAIP or CASR. Specifically ubiquitinates pathogenic SOD1 variants, which leads to their proteasomal degradation and to neuronal protection. In Homo sapiens (Human), this protein is E3 ubiquitin-protein ligase RNF19A (RNF19A).